The primary structure comprises 808 residues: Piwi-like protein 1 (808 aa).

One can recognise a PAZ domain in the interval 214–333 (RINRVLNENN…IPGELCYLCG (120 aa)). Residues 300-322 (SMVRPKEKTENEPEGPTETDQSL) are disordered. Residues 492–790 (HMALVFIPDD…LAELVGKIHR (299 aa)) form the Piwi domain.

This sequence belongs to the argonaute family. Piwi subfamily. In terms of tissue distribution, expressed in dividing adult somatic stem cells (neoblasts).

This is Piwi-like protein 1 (wi-1) from Schmidtea mediterranea (Freshwater planarian flatworm).